A 364-amino-acid chain; its full sequence is Aminomethyltransferase (364 aa).

The protein belongs to the GcvT family. As to quaternary structure, the glycine cleavage system is composed of four proteins: P, T, L and H.

The enzyme catalyses N(6)-[(R)-S(8)-aminomethyldihydrolipoyl]-L-lysyl-[protein] + (6S)-5,6,7,8-tetrahydrofolate = N(6)-[(R)-dihydrolipoyl]-L-lysyl-[protein] + (6R)-5,10-methylene-5,6,7,8-tetrahydrofolate + NH4(+). In terms of biological role, the glycine cleavage system catalyzes the degradation of glycine. The protein is Aminomethyltransferase of Shewanella oneidensis (strain ATCC 700550 / JCM 31522 / CIP 106686 / LMG 19005 / NCIMB 14063 / MR-1).